Consider the following 843-residue polypeptide: Protein P (843 aa).

The terminal protein domain (TP) stretch occupies residues 1–177; it reads MPLSYPHFRK…FCGSPYSWEQ (177 aa). The interval 178 to 346 is spacer; the sequence is ELQHGSTSLN…YCLSHIINLL (169 aa). The disordered stretch occupies residues 284-308; it reads EANPSLSTSKRHTSTGNAVELNPVP. The tract at residues 347 to 690 is polymerase/reverse transcriptase domain (RT); it reads EDWGPCYEHG…YMNLYPVARQ (344 aa). The region spanning 357 to 600 is the Reverse transcriptase domain; sequence QHHIRTPRTP…YNLHFMGYVI (244 aa). Asp429, Asp551, and Asp552 together coordinate Mg(2+).

Belongs to the hepadnaviridae P protein family.

The enzyme catalyses DNA(n) + a 2'-deoxyribonucleoside 5'-triphosphate = DNA(n+1) + diphosphate. It catalyses the reaction Endonucleolytic cleavage to 5'-phosphomonoester.. With respect to regulation, activated by host HSP70 and HSP40 in vitro to be able to bind the epsilon loop of the pgRNA. Because deletion of the RNase H region renders the protein partly chaperone-independent, the chaperones may be needed indirectly to relieve occlusion of the RNA-binding site by this domain. Inhibited by several reverse-transcriptase inhibitors: Lamivudine, Adefovir and Entecavir. Functionally, multifunctional enzyme that converts the viral RNA genome into dsDNA in viral cytoplasmic capsids. This enzyme displays a DNA polymerase activity that can copy either DNA or RNA templates, and a ribonuclease H (RNase H) activity that cleaves the RNA strand of RNA-DNA heteroduplexes in a partially processive 3'- to 5'-endonucleasic mode. Neo-synthesized pregenomic RNA (pgRNA) are encapsidated together with the P protein, and reverse-transcribed inside the nucleocapsid. Initiation of reverse-transcription occurs first by binding the epsilon loop on the pgRNA genome, and is initiated by protein priming, thereby the 5'-end of (-)DNA is covalently linked to P protein. Partial (+)DNA is synthesized from the (-)DNA template and generates the relaxed circular DNA (RC-DNA) genome. After budding and infection, the RC-DNA migrates in the nucleus, and is converted into a plasmid-like covalently closed circular DNA (cccDNA). The activity of P protein does not seem to be necessary for cccDNA generation, and is presumably released from (+)DNA by host nuclear DNA repair machinery. The sequence is that of Protein P from Homo sapiens (Human).